The sequence spans 404 residues: G1/S-specific cyclin-E2 (404 aa).

The interval 1–44 (MSRRSSRLQAKQQPQPSQTESPQEAQIIQAKKRKTTQDVKKRRE) is disordered. Low complexity predominate over residues 12-26 (QQPQPSQTESPQEAQ). Phosphoserine is present on Ser21. The segment covering 35 to 44 (TTQDVKKRRE) has biased composition (basic and acidic residues). An N6-lactoyllysine modification is found at Lys348. Ser383 bears the Phosphoserine mark. Thr392 is modified (phosphothreonine).

It belongs to the cyclin family. Cyclin E subfamily. As to quaternary structure, interacts with the CDK2 (in vivo) and CDK3 (in vitro) protein kinases to form a serine/threonine kinase holoenzyme complex. The cyclin subunit imparts substrate specificity to the complex. In terms of processing, phosphorylation by CDK2 triggers its release from CDK2 and degradation via the ubiquitin proteasome pathway. Lactylated at Lys-348. Delactylated by SIRT3. As to expression, according to PubMed:9858585, highest levels of expression in adult testis, thymus and brain. Lower levels in placenta, spleen and colon. Consistently elevated levels in tumor-derived cells compared to non-transformed proliferating cells. According to PubMed:9840927: low levels in thymus, prostate, brain, skeletal muscle, and kidney. Elevated levels in lung. According to PubMed:9840943 highly expressed in testis, placenta, thymus and brain. In a lesser extent in small intestine and colon.

The protein localises to the nucleus. Its function is as follows. Essential for the control of the cell cycle at the late G1 and early S phase. This Homo sapiens (Human) protein is G1/S-specific cyclin-E2 (CCNE2).